The primary structure comprises 561 residues: Arginine--tRNA ligase (561 aa).

The short motif at 129-139 (ANPTGPLHIGH) is the 'HIGH' region element.

The protein belongs to the class-I aminoacyl-tRNA synthetase family. In terms of assembly, monomer.

The protein resides in the cytoplasm. It catalyses the reaction tRNA(Arg) + L-arginine + ATP = L-arginyl-tRNA(Arg) + AMP + diphosphate. This is Arginine--tRNA ligase from Geotalea daltonii (strain DSM 22248 / JCM 15807 / FRC-32) (Geobacter daltonii).